Consider the following 345-residue polypeptide: Twinfilin (345 aa).

ADF-H domains are found at residues 4 to 139 (QTGI…KHKR) and 177 to 312 (GISC…DELH). The interval 320–345 (PAFAKPKGPPNRGAKRLTRPSNEDQV) is disordered.

Belongs to the actin-binding proteins ADF family. Twinfilin subfamily. As to quaternary structure, interacts with G-actin; ADP-actin form.

It localises to the cytoplasm. The protein resides in the cytoskeleton. The protein localises to the cell cortex. Functionally, actin-binding protein involved in motile and morphological processes. Inhibits actin polymerization, likely by sequestering G-actin. This is Twinfilin (twf) from Drosophila pseudoobscura pseudoobscura (Fruit fly).